Reading from the N-terminus, the 442-residue chain is Protein PHYTOCHROME KINASE SUBSTRATE 2 (442 aa).

The disordered stretch occupies residues 110-130 (IFVGPKQSSKNSSETPSLRSE). Residues 121–130 (SSETPSLRSE) are compositionally biased toward low complexity. A phosphoserine mark is found at Ser239 and Ser245. Residues 394–442 (VSGDSYTSMNRTPSYVPRFPVEANPTSTETRRRISSSSVSHTQSPFLYT) are disordered. Residues 397–406 (DSYTSMNRTP) show a composition bias toward polar residues. Residues 428–442 (SSSSVSHTQSPFLYT) show a composition bias toward low complexity.

Belongs to the PKS family. As to quaternary structure, interacts with PKS1, RPT3, PHOT1 and PHOT2. In terms of tissue distribution, expressed in leaves, with the strongest expression on edges of the laminas. Not found in roots.

The protein localises to the cell membrane. In terms of biological role, acts predominantly in the phot1 pathway. Involved in the leaf positioning and also in the phot2 pathway controlling the leaf flattening. Component of the network that modulates the very low-fluence response (VLFR) branch of phyA signaling. Regulates phytochrome-mediated photomorphogenesis and hypocotyl phototropism. May act by controlling auxin homeostasis. The chain is Protein PHYTOCHROME KINASE SUBSTRATE 2 (PKS2) from Arabidopsis thaliana (Mouse-ear cress).